Here is a 778-residue protein sequence, read N- to C-terminus: Ribosome biogenesis protein BOP1 homolog (778 aa).

Residues methionine 1–lysine 10 show a composition bias toward basic residues. Residues methionine 1–isoleucine 152 are disordered. 3 stretches are compositionally biased toward acidic residues: residues glutamate 44–aspartate 53, serine 60–glycine 72, and serine 84–glutamate 105. Polar residues predominate over residues threonine 114 to glutamate 124. Residues glutamate 142–aspartate 151 show a composition bias toward acidic residues. WD repeat units lie at residues glycine 438–glutamate 479, glutamate 481–isoleucine 519, asparagine 564–proline 606, lysine 609–lysine 647, threonine 650–glutamine 689, leucine 693–glutamine 732, and arginine 748–threonine 778.

This sequence belongs to the WD repeat BOP1/ERB1 family.

It localises to the nucleus. It is found in the nucleolus. The protein localises to the nucleoplasm. Functionally, required for maturation of ribosomal RNAs and formation of the large ribosomal subunit. In Drosophila willistoni (Fruit fly), this protein is Ribosome biogenesis protein BOP1 homolog.